The sequence spans 220 residues: Antistasin (220 aa).

The N-terminal stretch at 1-19 (MNYLFVFLALSAAVTFANA) is a signal peptide. Antistasin-like domains lie at 21–46 (CNKIQCRMFCKFGFQQDENGCDICKC), 54–79 (CSNRYCKMLCPEGFQVDANGCQICRC), 91–117 (CDGLKQCKMHCENGFVRDENGCPKCEC), 120–145 (CKQFQCLIFCPHGNEVDENGCKTCKC), 154–180 (CDDLKQCRMFCENGFVRDENGCKKCEC), and 183–208 (CKNFICQIFCEYGNVVDENGCKTCKC).

It belongs to the protease inhibitor I15 (antistasin) family. In terms of tissue distribution, gland cells. It is more strongly expressed in the head than in the gastric tissue.

The protein resides in the secreted. This highly disulfide-bonded protein is a potent inhibitor of factor Xa. Facilitates digestion of tissues and may also protect the gastric tissues from its own digestive enzymes. May have therapeutic utility as an anticoagulant. Also exhibits a strong metastatic activity. In Hydra vulgaris (Hydra), this protein is Antistasin.